The following is a 259-amino-acid chain: MKKQDRRPEILVCNDDGIEGEGIHVLAASMKKLGNVTVVAPAEPHSGMSHAMTLGVPLRIREFRRNNRFFGHTVSGTPVDCIKVALSHIMKVKPDLIVSGINYGSNTAMSTLYSGTVAAALEGAIQGVTSLAFSLTTYEHADFTYAGKFARKLARKVLQEGLPEDTILSVNIPNVPEADIQGVRITGQGRSRWSEDAIERNDMYGNPYYWLNGTLMLLDEGMESDEFAVRRNFVTLTPLSCDLTRHGFRSTLEQWKLKK.

A divalent metal cation-binding residues include aspartate 15, aspartate 16, serine 46, and asparagine 102.

It belongs to the SurE nucleotidase family. Requires a divalent metal cation as cofactor.

The protein resides in the cytoplasm. The catalysed reaction is a ribonucleoside 5'-phosphate + H2O = a ribonucleoside + phosphate. In terms of biological role, nucleotidase that shows phosphatase activity on nucleoside 5'-monophosphates. In Chlorobium luteolum (strain DSM 273 / BCRC 81028 / 2530) (Pelodictyon luteolum), this protein is 5'-nucleotidase SurE.